Reading from the N-terminus, the 59-residue chain is Venom protein 37.1 (59 aa).

The first 18 residues, Met-1–Ala-18, serve as a signal peptide directing secretion.

The protein belongs to the non-disulfide-bridged peptide (NDBP) superfamily. Long chain multifunctional peptide (group 2) family. In terms of tissue distribution, expressed by the venom gland.

It localises to the secreted. This is Venom protein 37.1 from Lychas mucronatus (Chinese swimming scorpion).